The chain runs to 347 residues: Heat-inducible transcription repressor HrcA (347 aa).

It belongs to the HrcA family.

Functionally, negative regulator of class I heat shock genes (grpE-dnaK-dnaJ and groELS operons). Prevents heat-shock induction of these operons. The protein is Heat-inducible transcription repressor HrcA of Lactiplantibacillus plantarum (strain ATCC BAA-793 / NCIMB 8826 / WCFS1) (Lactobacillus plantarum).